Consider the following 325-residue polypeptide: Heme A synthase (325 aa).

Transmembrane regions (helical) follow at residues 6–26 (WLAVCILLILSMVSIGGFTRL), 88–108 (LVGRILGLVFFIGLVYFFVVG), 116–136 (LRLCFALVLGVIQGFVGWYMV), 155–175 (LFCASLLFMVLVYEFLSPTVI), and 184–204 (LVGCSLMFLLSMQIILGGLVA). Heme is bound at residue His246. Transmembrane regions (helical) follow at residues 248 to 268 (MSAFLLTFICLVCLVISFFYD), 275 to 295 (VFLVASMMLLQMFFGVLTLLF), and 297 to 317 (IPIDIALLHQIMAFILLGICV). Residue His305 participates in heme binding.

This sequence belongs to the COX15/CtaA family. Type 2 subfamily. As to quaternary structure, interacts with CtaB. The cofactor is heme b.

Its subcellular location is the cell membrane. The enzyme catalyses Fe(II)-heme o + 2 A + H2O = Fe(II)-heme a + 2 AH2. The protein operates within porphyrin-containing compound metabolism; heme A biosynthesis; heme A from heme O: step 1/1. Its function is as follows. Catalyzes the conversion of heme O to heme A by two successive hydroxylations of the methyl group at C8. The first hydroxylation forms heme I, the second hydroxylation results in an unstable dihydroxymethyl group, which spontaneously dehydrates, resulting in the formyl group of heme A. The polypeptide is Heme A synthase (Neorickettsia sennetsu (strain ATCC VR-367 / Miyayama) (Ehrlichia sennetsu)).